A 1155-amino-acid chain; its full sequence is DNA-directed RNA polymerase subunit beta (1155 aa).

The protein belongs to the RNA polymerase beta chain family. In terms of assembly, the RNAP catalytic core consists of 2 alpha, 1 beta, 1 beta' and 1 omega subunit. When a sigma factor is associated with the core the holoenzyme is formed, which can initiate transcription.

It catalyses the reaction RNA(n) + a ribonucleoside 5'-triphosphate = RNA(n+1) + diphosphate. Functionally, DNA-dependent RNA polymerase catalyzes the transcription of DNA into RNA using the four ribonucleoside triphosphates as substrates. The chain is DNA-directed RNA polymerase subunit beta from Thermobifida fusca (strain YX).